The primary structure comprises 1366 residues: Collagen alpha-2(I) chain (1366 aa).

The signal sequence occupies residues 1-22 (MLSFVDTRTLLLLAVTLCLATC). The residue at position 23 (Q23) is a Pyrrolidone carboxylic acid. The propeptide at 23 to 79 (QSLQEETVRKGPAGDRGPRGERGPPGPPGRDGEDGPTGPPGPPGPPGPPGLGGNFAA) is N-terminal propeptide. Residues 28–44 (ETVRKGPAGDRGPRGER) show a composition bias toward basic and acidic residues. Positions 28–1130 (ETVRKGPAGD…QPRSAPSLRP (1103 aa)) are disordered. Residues P47, P50, P62, P65, P68, and P71 each carry the 4-hydroxyproline modification. Positions 59-71 (TGPPGPPGPPGPP) are enriched in pro residues. At Q80 the chain carries Pyrrolidone carboxylic acid. K84 is subject to Allysine. Gly residues predominate over residues 84–94 (KGVGLGPGPMG). The segment covering 95 to 140 (LMGPRGPPGAAGAPGPQGFQGPAGEPGEPGQTGPAGARGPAGPPGK) has biased composition (low complexity). 2 positions are modified to 4-hydroxyproline: P102 and P108. The segment covering 141 to 155 (AGEDGHPGKPGRPGE) has biased composition (basic and acidic residues). K177 bears the 5-hydroxylysine; alternate mark. K177 is a glycosylation site (O-linked (Gal...) hydroxylysine; alternate). 6 stretches are compositionally biased toward low complexity: residues 225 to 254 (VGAP…SAGP), 269 to 293 (AVGN…LSGP), 300 to 321 (PGAN…AGAP), 330 to 345 (PGPV…RGLV), 398 to 410 (LRGS…LPGA), and 419 to 434 (PPGS…VRGP). 4-hydroxyproline is present on residues P420, P441, and P444. Composition is skewed to low complexity over residues 470-489 (LPGI…RGEP) and 513-531 (AGLA…NGAQ). The segment covering 538–547 (GVQGGKGEQG) has biased composition (gly residues). Low complexity-rich tracts occupy residues 594-611 (PGES…SRGP), 623-648 (EPGV…RGAA), 663-710 (RGEI…PRGS), and 717-737 (VGPA…QPGA). The span at 738–747 (KGERGAKGPK) shows a compositional bias: basic and acidic residues. The span at 752 to 765 (VVGPTGPVGAAGPA) shows a compositional bias: low complexity. Gly residues predominate over residues 775–784 (GSRGDGGPPG). 5 stretches are compositionally biased toward low complexity: residues 786 to 795 (TGFPGAAGRT), 849 to 876 (SGEA…LGLP), 884 to 932 (LPGV…NPGN), 956 to 974 (PVGA…PAGK), and 983 to 1001 (PSGP…PSGP). The segment covering 1005–1016 (RGDKGEPGEKGP) has biased composition (basic and acidic residues). The segment covering 1089–1101 (AGPPGPPGPPGPP) has biased composition (pro residues). A propeptide spans 1120–1366 (DQPRSAPSLR…FVDIGPVCFK (247 aa)) (C-terminal propeptide). Positions 1133 to 1366 (YEVDATLKSL…FVDIGPVCFK (234 aa)) constitute a Fibrillar collagen NC1 domain. 3 disulfide bridges follow: C1163–C1195, C1203–C1364, and C1272–C1317. Positions 1181, 1183, 1184, 1186, and 1189 each coordinate Ca(2+). N1267 carries an N-linked (GlcNAc...) asparagine glycan.

It belongs to the fibrillar collagen family. As to quaternary structure, trimers of one alpha 2(I) and two alpha 1(I) chains. Interacts (via C-terminus) with TMEM131 (via PapD-L domain); the interaction is direct and is involved in assembly and TRAPPIII ER-to-Golgi transport complex-dependent secretion of collagen. Prolines at the third position of the tripeptide repeating unit (G-X-Y) are hydroxylated in some or all of the chains. As to expression, forms the fibrils of tendon, ligaments and bones. In bones the fibrils are mineralized with calcium hydroxyapatite.

It is found in the secreted. The protein localises to the extracellular space. The protein resides in the extracellular matrix. Functionally, type I collagen is a member of group I collagen (fibrillar forming collagen). The chain is Collagen alpha-2(I) chain (COL1A2) from Homo sapiens (Human).